We begin with the raw amino-acid sequence, 340 residues long: TATA-box-binding protein (340 aa).

The segment at 1-78 is disordered; that stretch reads MNLNSPAVSM…HSLQGSSMQM (78 aa). Low complexity predominate over residues 57–68; it reads PQSIQPMQSQQM. Polar residues predominate over residues 69-78; sequence HSLQGSSMQM. 2 consecutive repeat copies span residues 168–244 and 258–335.

It belongs to the TBP family. Component of the TFIID basal transcription factor complex, composed of TATA-box-binding protein tbp-1, and a number of TBP-associated factors (TAFs). Binds DNA as monomer.

Its subcellular location is the nucleus. The TFIID basal transcription factor complex plays a major role in the initiation of RNA polymerase II (Pol II)-dependent transcription. TFIID recognizes and binds promoters via its subunit tbp-1, a TATA-box-binding protein, and promotes assembly of the pre-initiation complex (PIC). The TFIID complex consists of tbp-1 and TBP-associated factors (TAFs). General transcription factor that functions at the core of the TFIID complex. In Caenorhabditis elegans, this protein is TATA-box-binding protein (tbp-1).